Reading from the N-terminus, the 166-residue chain is Phosphopantetheine adenylyltransferase (166 aa).

Residue Thr11 coordinates substrate. ATP contacts are provided by residues 11-12 (TF) and His19. Residues Lys43, Thr79, and Arg93 each contribute to the substrate site. Residues Glu104 and 128–134 (LEPLNST) contribute to the ATP site.

The protein belongs to the bacterial CoaD family. In terms of assembly, homohexamer. Mg(2+) is required as a cofactor.

The protein resides in the cytoplasm. The catalysed reaction is (R)-4'-phosphopantetheine + ATP + H(+) = 3'-dephospho-CoA + diphosphate. It participates in cofactor biosynthesis; coenzyme A biosynthesis; CoA from (R)-pantothenate: step 4/5. Functionally, reversibly transfers an adenylyl group from ATP to 4'-phosphopantetheine, yielding dephospho-CoA (dPCoA) and pyrophosphate. The protein is Phosphopantetheine adenylyltransferase of Lactococcus lactis subsp. cremoris (strain MG1363).